A 231-amino-acid polypeptide reads, in one-letter code: Small ribosomal subunit protein uS3 (231 aa).

The KH type-2 domain maps to 39-107 (IRKHIMKAIP…DVSLNIVEIR (69 aa)).

The protein belongs to the universal ribosomal protein uS3 family. In terms of assembly, part of the 30S ribosomal subunit. Forms a tight complex with proteins S10 and S14.

Its function is as follows. Binds the lower part of the 30S subunit head. Binds mRNA in the 70S ribosome, positioning it for translation. In Rhizorhabdus wittichii (strain DSM 6014 / CCUG 31198 / JCM 15750 / NBRC 105917 / EY 4224 / RW1) (Sphingomonas wittichii), this protein is Small ribosomal subunit protein uS3.